The primary structure comprises 957 residues: Dystrophin-related protein 2 (957 aa).

Spectrin repeat units lie at residues 102-179 and 231-337; these read DLSG…EELE and EHLL…QLQD. A WW domain is found at 358-383; that stretch reads WERAISPNKVPYYINHQAQTTCWDHP. A ZZ-type; degenerate zinc finger spans residues 605–661; that stretch reads KHQTKCSICRQCPIKGFRYRSLKQFNVDICQTCFLTGRASKGNKLHYPIMEYYTPTT. Residues Cys-610, Cys-613, Cys-634, and Cys-637 each coordinate Zn(2+). Ser-748 bears the Phosphoserine mark. The segment covering 876-894 has biased composition (low complexity); sequence QPPSESDGNGSAGSSLASS. The interval 876–923 is disordered; it reads QPPSESDGNGSAGSSLASSPRQSEGSHPREKGQTTPDTEVADDVGSKS. Position 910 is a phosphothreonine (Thr-910).

As to quaternary structure, interacts with PRX; this enhances phosphorylation. Identified in a dystroglycan complex that contains at least PRX, DRP2, UTRN, DMD and DAG1. Detected in quadriceps nerve Schwann cells. Detected in sciatic nerve. Detected in trigeminal nerve Schwann cells (at protein level). Detected in brain and spinal cord.

It is found in the postsynaptic density. The protein resides in the cell projection. It localises to the dendrite. Its subcellular location is the perikaryon. The protein localises to the cell membrane. In terms of biological role, required for normal myelination and for normal organization of the cytoplasm and the formation of Cajal bands in myelinating Schwann cells. Required for normal PRX location at appositions between the abaxonal surface of the myelin sheath and the Schwann cell plasma membrane. Possibly involved in membrane-cytoskeleton interactions of the central nervous system. This chain is Dystrophin-related protein 2 (Drp2), found in Mus musculus (Mouse).